The chain runs to 160 residues: Crossover junction endodeoxyribonuclease RuvC (160 aa).

Catalysis depends on residues aspartate 7, glutamate 70, and aspartate 142. Mg(2+) contacts are provided by aspartate 7, glutamate 70, and aspartate 142.

Belongs to the RuvC family. In terms of assembly, homodimer which binds Holliday junction (HJ) DNA. The HJ becomes 2-fold symmetrical on binding to RuvC with unstacked arms; it has a different conformation from HJ DNA in complex with RuvA. In the full resolvosome a probable DNA-RuvA(4)-RuvB(12)-RuvC(2) complex forms which resolves the HJ. It depends on Mg(2+) as a cofactor.

The protein localises to the cytoplasm. It catalyses the reaction Endonucleolytic cleavage at a junction such as a reciprocal single-stranded crossover between two homologous DNA duplexes (Holliday junction).. In terms of biological role, the RuvA-RuvB-RuvC complex processes Holliday junction (HJ) DNA during genetic recombination and DNA repair. Endonuclease that resolves HJ intermediates. Cleaves cruciform DNA by making single-stranded nicks across the HJ at symmetrical positions within the homologous arms, yielding a 5'-phosphate and a 3'-hydroxyl group; requires a central core of homology in the junction. The consensus cleavage sequence is 5'-(A/T)TT(C/G)-3'. Cleavage occurs on the 3'-side of the TT dinucleotide at the point of strand exchange. HJ branch migration catalyzed by RuvA-RuvB allows RuvC to scan DNA until it finds its consensus sequence, where it cleaves and resolves the cruciform DNA. The chain is Crossover junction endodeoxyribonuclease RuvC from Ehrlichia ruminantium (strain Welgevonden).